A 124-amino-acid polypeptide reads, in one-letter code: MATINQLVRKPRIKLVVKSNVPALEACPQKRGVCTRVYTTTPKKPNSALRKVCRVRLTNGFEVTSYIGGEGHNLQEHSVVLIRGGRVKDLPGVRYHTVRGALDCAGVKDRKQARSKYGVKRPKA.

The residue at position 89 (aspartate 89) is a 3-methylthioaspartic acid.

This sequence belongs to the universal ribosomal protein uS12 family. In terms of assembly, part of the 30S ribosomal subunit. Contacts proteins S8 and S17. May interact with IF1 in the 30S initiation complex.

Its function is as follows. With S4 and S5 plays an important role in translational accuracy. Functionally, interacts with and stabilizes bases of the 16S rRNA that are involved in tRNA selection in the A site and with the mRNA backbone. Located at the interface of the 30S and 50S subunits, it traverses the body of the 30S subunit contacting proteins on the other side and probably holding the rRNA structure together. The combined cluster of proteins S8, S12 and S17 appears to hold together the shoulder and platform of the 30S subunit. The chain is Small ribosomal subunit protein uS12 from Aeromonas hydrophila subsp. hydrophila (strain ATCC 7966 / DSM 30187 / BCRC 13018 / CCUG 14551 / JCM 1027 / KCTC 2358 / NCIMB 9240 / NCTC 8049).